We begin with the raw amino-acid sequence, 476 residues long: 3-isopropylmalate dehydratase large subunit (476 aa).

[4Fe-4S] cluster-binding residues include Cys355, Cys416, and Cys419.

It belongs to the aconitase/IPM isomerase family. LeuC type 1 subfamily. Heterodimer of LeuC and LeuD. [4Fe-4S] cluster is required as a cofactor.

It carries out the reaction (2R,3S)-3-isopropylmalate = (2S)-2-isopropylmalate. The protein operates within amino-acid biosynthesis; L-leucine biosynthesis; L-leucine from 3-methyl-2-oxobutanoate: step 2/4. Catalyzes the isomerization between 2-isopropylmalate and 3-isopropylmalate, via the formation of 2-isopropylmaleate. The protein is 3-isopropylmalate dehydratase large subunit of Sphingopyxis alaskensis (strain DSM 13593 / LMG 18877 / RB2256) (Sphingomonas alaskensis).